We begin with the raw amino-acid sequence, 343 residues long: UDP-3-O-(3-hydroxymyristoyl)glucosamine N-acyltransferase (343 aa).

H239 acts as the Proton acceptor in catalysis.

The protein belongs to the transferase hexapeptide repeat family. LpxD subfamily. Homotrimer.

The catalysed reaction is a UDP-3-O-[(3R)-3-hydroxyacyl]-alpha-D-glucosamine + a (3R)-hydroxyacyl-[ACP] = a UDP-2-N,3-O-bis[(3R)-3-hydroxyacyl]-alpha-D-glucosamine + holo-[ACP] + H(+). The enzyme catalyses UDP-3-O-[(3R)-3-hydroxytetradecanoyl]-alpha-D-glucosamine + (3R)-hydroxytetradecanoyl-[ACP] = UDP-2-N,3-O-bis[(3R)-3-hydroxytetradecanoyl]-alpha-D-glucosamine + holo-[ACP] + H(+). Its pathway is glycolipid biosynthesis; lipid IV(A) biosynthesis; lipid IV(A) from (3R)-3-hydroxytetradecanoyl-[acyl-carrier-protein] and UDP-N-acetyl-alpha-D-glucosamine: step 3/6. Catalyzes the N-acylation of UDP-3-O-(hydroxytetradecanoyl)glucosamine using 3-hydroxytetradecanoyl-ACP as the acyl donor. Is involved in the biosynthesis of lipid A, a phosphorylated glycolipid that anchors the lipopolysaccharide to the outer membrane of the cell. This is UDP-3-O-(3-hydroxymyristoyl)glucosamine N-acyltransferase from Blochmanniella pennsylvanica (strain BPEN).